The following is a 932-amino-acid chain: Isoleucine--tRNA ligase (932 aa).

The 'HIGH' region motif lies at Pro-57–His-67. Residue Glu-556 coordinates L-isoleucyl-5'-AMP. Residues Lys-597–Ser-601 carry the 'KMSKS' region motif. Lys-600 is an ATP binding site. Cys-891, Cys-894, Cys-911, and Cys-914 together coordinate Zn(2+).

It belongs to the class-I aminoacyl-tRNA synthetase family. IleS type 1 subfamily. Monomer. Requires Zn(2+) as cofactor.

It localises to the cytoplasm. The catalysed reaction is tRNA(Ile) + L-isoleucine + ATP = L-isoleucyl-tRNA(Ile) + AMP + diphosphate. In terms of biological role, catalyzes the attachment of isoleucine to tRNA(Ile). As IleRS can inadvertently accommodate and process structurally similar amino acids such as valine, to avoid such errors it has two additional distinct tRNA(Ile)-dependent editing activities. One activity is designated as 'pretransfer' editing and involves the hydrolysis of activated Val-AMP. The other activity is designated 'posttransfer' editing and involves deacylation of mischarged Val-tRNA(Ile). The chain is Isoleucine--tRNA ligase from Lactiplantibacillus plantarum (strain ATCC BAA-793 / NCIMB 8826 / WCFS1) (Lactobacillus plantarum).